The primary structure comprises 863 residues: Paramyosin (863 aa).

Positions 1–18 (MSESHVKISRTIIRGTSP) are nonhelical region. Positions 19-836 (STVRLESRVR…ERTITIKRTI (818 aa)) form a coiled coil. Residues 837–863 (GGPGSRAVSVVREINSVSRGNRATSIM) form a nonhelical region region.

It belongs to the paramyosin family. In terms of assembly, homodimer.

The protein resides in the cytoplasm. It is found in the myofibril. Paramyosin is a major structural component of many thick filaments isolated from invertebrate muscles. The chain is Paramyosin (PMY) from Taenia saginata (Beef tapeworm).